Consider the following 144-residue polypeptide: Large ribosomal subunit protein uL15 (144 aa).

The segment at 1–52 (MRLNTLSPAEGAKHAPKRVGRGIGSGLGKTGGRGHKGQKSRSGGGVRRGFEG) is disordered. Positions 21–31 (RGIGSGLGKTG) are enriched in gly residues.

Belongs to the universal ribosomal protein uL15 family. In terms of assembly, part of the 50S ribosomal subunit.

Binds to the 23S rRNA. The sequence is that of Large ribosomal subunit protein uL15 from Buchnera aphidicola subsp. Acyrthosiphon kondoi (Acyrthosiphon kondoi symbiotic bacterium).